Here is a 299-residue protein sequence, read N- to C-terminus: Sodium/potassium-transporting ATPase subunit beta-2 (299 aa).

The Cytoplasmic segment spans residues 1-36 (MAALTQKKTCSQMMEEWKEFMWNPRTREFMGRTGSS). The chain crosses the membrane as a helical; Signal-anchor for type II membrane protein span at residues 37–57 (WALILLFYVVFYAFLTAVFSL). Topologically, residues 58–299 (SLWVMLQTID…VIFTMKIDRL (242 aa)) are extracellular. 2 N-linked (GlcNAc...) asparagine glycosylation sites follow: asparagine 101 and asparagine 119. 2 disulfide bridges follow: cysteine 130–cysteine 152 and cysteine 162–cysteine 178. Residues asparagine 199, asparagine 226, asparagine 247, and asparagine 259 are each glycosylated (N-linked (GlcNAc...) asparagine). Cysteine 206 and cysteine 270 are joined by a disulfide.

This sequence belongs to the X(+)/potassium ATPases subunit beta family. As to quaternary structure, the sodium/potassium-transporting ATPase is composed of a catalytic alpha subunit, an auxiliary non-catalytic beta subunit and an additional regulatory subunit. Expressed at a high level in bladder epithelial cells and eye and at a trace level in kidney; it is not detectable in significant amounts in the stomach, colon and small intestine.

Its subcellular location is the cell membrane. Functionally, this is the non-catalytic component of the active enzyme, which catalyzes the hydrolysis of ATP coupled with the exchange of Na(+) and K(+) ions across the plasma membrane. The exact function of this glycoprotein is not known. Some specific sequence of the beta subunit can modulate the activation of the Na,K-pump by extracellular potassium ions. The protein is Sodium/potassium-transporting ATPase subunit beta-2 of Rhinella marina (Cane toad).